Reading from the N-terminus, the 279-residue chain is 2-dehydro-3-deoxyphosphooctonate aldolase (279 aa).

This sequence belongs to the KdsA family.

It localises to the cytoplasm. It carries out the reaction D-arabinose 5-phosphate + phosphoenolpyruvate + H2O = 3-deoxy-alpha-D-manno-2-octulosonate-8-phosphate + phosphate. It participates in carbohydrate biosynthesis; 3-deoxy-D-manno-octulosonate biosynthesis; 3-deoxy-D-manno-octulosonate from D-ribulose 5-phosphate: step 2/3. The protein operates within bacterial outer membrane biogenesis; lipopolysaccharide biosynthesis. This Azoarcus sp. (strain BH72) protein is 2-dehydro-3-deoxyphosphooctonate aldolase.